The primary structure comprises 56 residues: Ribosome modulation factor (56 aa).

The protein belongs to the ribosome modulation factor family.

It is found in the cytoplasm. Its function is as follows. During stationary phase, converts 70S ribosomes to an inactive dimeric form (100S ribosomes). The protein is Ribosome modulation factor of Proteus mirabilis (strain HI4320).